A 334-amino-acid polypeptide reads, in one-letter code: Glyceraldehyde-3-phosphate dehydrogenase (334 aa).

Residues 12 to 13 (RI), aspartate 35, arginine 79, and serine 121 each bind NAD(+). D-glyceraldehyde 3-phosphate-binding positions include 152-154 (SCT), threonine 183, arginine 198, 211-212 (TG), and arginine 234. The Nucleophile role is filled by cysteine 153. Residue asparagine 315 coordinates NAD(+).

The protein belongs to the glyceraldehyde-3-phosphate dehydrogenase family. Homotetramer.

The protein resides in the cytoplasm. The catalysed reaction is D-glyceraldehyde 3-phosphate + phosphate + NAD(+) = (2R)-3-phospho-glyceroyl phosphate + NADH + H(+). The protein operates within carbohydrate degradation; glycolysis; pyruvate from D-glyceraldehyde 3-phosphate: step 1/5. Its function is as follows. Catalyzes the oxidative phosphorylation of glyceraldehyde 3-phosphate (G3P) to 1,3-bisphosphoglycerate (BPG) using the cofactor NAD. The first reaction step involves the formation of a hemiacetal intermediate between G3P and a cysteine residue, and this hemiacetal intermediate is then oxidized to a thioester, with concomitant reduction of NAD to NADH. The reduced NADH is then exchanged with the second NAD, and the thioester is attacked by a nucleophilic inorganic phosphate to produce BPG. In Corynebacterium glutamicum (strain ATCC 13032 / DSM 20300 / JCM 1318 / BCRC 11384 / CCUG 27702 / LMG 3730 / NBRC 12168 / NCIMB 10025 / NRRL B-2784 / 534), this protein is Glyceraldehyde-3-phosphate dehydrogenase (gap).